The chain runs to 289 residues: 4-hydroxy-tetrahydrodipicolinate synthase (289 aa).

Thr-44 contacts pyruvate. Catalysis depends on Tyr-130, which acts as the Proton donor/acceptor. Lys-158 (schiff-base intermediate with substrate) is an active-site residue. Ile-200 serves as a coordination point for pyruvate.

Belongs to the DapA family. As to quaternary structure, homotetramer; dimer of dimers.

Its subcellular location is the cytoplasm. It carries out the reaction L-aspartate 4-semialdehyde + pyruvate = (2S,4S)-4-hydroxy-2,3,4,5-tetrahydrodipicolinate + H2O + H(+). Its pathway is amino-acid biosynthesis; L-lysine biosynthesis via DAP pathway; (S)-tetrahydrodipicolinate from L-aspartate: step 3/4. Catalyzes the condensation of (S)-aspartate-beta-semialdehyde [(S)-ASA] and pyruvate to 4-hydroxy-tetrahydrodipicolinate (HTPA). In Archaeoglobus fulgidus (strain ATCC 49558 / DSM 4304 / JCM 9628 / NBRC 100126 / VC-16), this protein is 4-hydroxy-tetrahydrodipicolinate synthase.